The primary structure comprises 388 residues: Cell adhesion molecule 4 (388 aa).

An N-terminal signal peptide occupies residues 1-20; sequence MGRARRFQWPLLLLWAAAAG. Residues 21 to 119 form the Ig-like V-type domain; sequence PGTAQEVQTE…DTHHQIATLT (99 aa). The Extracellular segment spans residues 25-324; sequence QEVQTENVTV…VEAQTSVPYA (300 aa). 2 N-linked (GlcNAc...) asparagine glycosylation sites follow: Asn-31 and Asn-67. Cystine bridges form between Cys-44–Cys-104, Cys-145–Cys-199, and Cys-245–Cys-291. Ig-like C2-type domains lie at 124–219 and 224–307; these read PENP…YVLD and PTAR…YVLV. A glycan (N-linked (GlcNAc...) asparagine) is linked at Asn-286. Residues 325–345 form a helical membrane-spanning segment; the sequence is IVGGILALLVFLIICVLVGMV. The Cytoplasmic segment spans residues 346 to 388; sequence WCSVRQKGSYLTHEASGLDEQGEAREAFLNGSDGHKRKEEFFI. Ser-361 carries the post-translational modification Phosphoserine.

This sequence belongs to the nectin family. As to quaternary structure, monomer and homodimer. N-glycosylated.

Its subcellular location is the membrane. Its function is as follows. Involved in the cell-cell adhesion. Has calcium- and magnesium-independent cell-cell adhesion activity. May have tumor-suppressor activity. This is Cell adhesion molecule 4 (Cadm4) from Rattus norvegicus (Rat).